The primary structure comprises 351 residues: Photosystem II D2 protein (351 aa).

Residues 39-59 (TAYLAVGGWFTGTTFVTSWYT) form a helical membrane-spanning segment. His-116 provides a ligand contact to chlorophyll a. A helical membrane pass occupies residues 123 to 139 (GFCLRQFEIARLVGIRP). 2 residues coordinate pheophytin a: Gln-128 and Asn-141. The helical transmembrane segment at 151–164 (IFVSVFLLYPLGQA) threads the bilayer. His-196 serves as a coordination point for chlorophyll a. The chain crosses the membrane as a helical span at residues 206-226 (GALLCAIHGATVENTLFEDGD). A plastoquinone-binding residues include His-213 and Phe-260. Fe cation is bound at residue His-213. His-267 is a Fe cation binding site. The chain crosses the membrane as a helical span at residues 277-293 (GLWTSAIGIVGLALNLR).

Belongs to the reaction center PufL/M/PsbA/D family. As to quaternary structure, PSII is composed of 1 copy each of membrane proteins PsbA, PsbB, PsbC, PsbD, PsbE, PsbF, PsbH, PsbI, PsbJ, PsbK, PsbL, PsbM, PsbT, PsbX, PsbY, PsbZ, Psb30/Ycf12, at least 3 peripheral proteins of the oxygen-evolving complex and a large number of cofactors. It forms dimeric complexes. It depends on The D1/D2 heterodimer binds P680, chlorophylls that are the primary electron donor of PSII, and subsequent electron acceptors. It shares a non-heme iron and each subunit binds pheophytin, quinone, additional chlorophylls, carotenoids and lipids. There is also a Cl(-1) ion associated with D1 and D2, which is required for oxygen evolution. The PSII complex binds additional chlorophylls, carotenoids and specific lipids. as a cofactor.

It localises to the plastid. The protein resides in the chloroplast thylakoid membrane. The catalysed reaction is 2 a plastoquinone + 4 hnu + 2 H2O = 2 a plastoquinol + O2. In terms of biological role, photosystem II (PSII) is a light-driven water:plastoquinone oxidoreductase that uses light energy to abstract electrons from H(2)O, generating O(2) and a proton gradient subsequently used for ATP formation. It consists of a core antenna complex that captures photons, and an electron transfer chain that converts photonic excitation into a charge separation. The D1/D2 (PsbA/PsbD) reaction center heterodimer binds P680, the primary electron donor of PSII as well as several subsequent electron acceptors. D2 is needed for assembly of a stable PSII complex. This Heterosigma akashiwo (strain NIES-293 / 8280G21-1) protein is Photosystem II D2 protein.